A 772-amino-acid chain; its full sequence is MILSLNLLHKISPKLKKIPLNELCAALMDLGCEVETINSIKPSTNLVFAKVLEKTRHPNANHLNLVKVKANQKVYEIVCGANNFSVHNWVVLAKLNAELANGLKITPRELRGYVSNGMLCAYSEINPQATSFLTSTDLDGILVLDDNYDHYKTPNQIFNLDDVILDLSIPSNRNDLNGYFWIAKELCAYFDFEYVVDATINHRPHKEIIDVRILSDDVNSYGIIEVKNIQNYILKWNTKSILINNQIKVLNNFADNMNFLTLLTANPLHAFDARKISGQIVVKNAEEDAILLGLDQKEYLIKKGDLIIVDDQKILALAGIIGSNDSKIDATSTTAYIECANFNPMLIANTARRLKINTAAAMRFSKPLTNYVTKVTLKKLLANFKSDAKLIYYFKHSVHNVIKNKINQVSDFVGAEIDLDTAQTFLKRLGYKINKSNLITPSHRYDVLNEFDVYEDIMKKISIQEIKPQPISFDILNFENNLAYDFEKKVSDFLVDQGLFECKTYNLKNQTQAHEFNFFNFKQAYEINNPTSNMRSHLKLNNLNSLLEVLEYNQNQKNELENIFEISKINPVDSSQQTVLSIILCKPLINSKINDSLIVNNFVTTKALLHALLTKLNIDYAYDKNHVVNELYDNNQLALINANKQVFGFIGQLKNQVKKTYGLSNDIFIINLNLTSYLNQKQVITKVIKPSMYHDVIRDISVKLASDVDLNNIIANIKKIKNIRKVEISDLYIKDDGIIYTFKYYINDHLSNLSSEQIIIIEQEVNNYLKQF.

One can recognise a tRNA-binding domain in the interval 40–158 (IKPSTNLVFA…DHYKTPNQIF (119 aa)). In terms of domain architecture, B5 spans 397–468 (SVHNVIKNKI…KKISIQEIKP (72 aa)). Positions 446, 452, 455, and 456 each coordinate Mg(2+). Residues 691–772 (SMYHDVIRDI…QEVNNYLKQF (82 aa)) enclose the FDX-ACB domain.

It belongs to the phenylalanyl-tRNA synthetase beta subunit family. Type 1 subfamily. As to quaternary structure, tetramer of two alpha and two beta subunits. The cofactor is Mg(2+).

It is found in the cytoplasm. The enzyme catalyses tRNA(Phe) + L-phenylalanine + ATP = L-phenylalanyl-tRNA(Phe) + AMP + diphosphate + H(+). The sequence is that of Phenylalanine--tRNA ligase beta subunit (pheT) from Ureaplasma parvum serovar 3 (strain ATCC 700970).